The following is a 313-amino-acid chain: MTSCQVAEDPIKKVAIFGGTHGNELTGVFLVKHWLENNTEIQRTGLEVKPFITNPRAVEKCTRYIDCDLNRVFDPENLGKRMSEDLPYEVRRAQEISRLFGPKDSEDSYDIIFDLHNTTSNMGCTLILEDSRNDFLIQMFHYIKTSLAPLPCYVYLIEHPSLKYATTRSIAKYPVGIEVGPQPQGVLRADILDQMRKMIKHALDFIHNFNEGKEFPPCAIEVYKIMEKVDYPRNESGEIAAIIHPKLQDQDWKPLHPGDPVFLTLDGKTIPLGGDCTVYPVFVNEAAYYEKKEAFAKTTKLTLNAKGIHSSLH.

Residues histidine 21 and glutamate 24 each contribute to the Zn(2+) site. Residues arginine 63, asparagine 70, and arginine 71 each coordinate N-acetyl-L-aspartate. Histidine 116 serves as a coordination point for Zn(2+). Positions 164 and 168 each coordinate N-acetyl-L-aspartate. The active-site Proton donor/acceptor is the glutamate 178. Tyrosine 288 provides a ligand contact to N-acetyl-L-aspartate.

This sequence belongs to the AspA/AstE family. Aspartoacylase subfamily. As to quaternary structure, homodimer. It depends on Zn(2+) as a cofactor.

Its subcellular location is the cytoplasm. It localises to the nucleus. The catalysed reaction is an N-acyl-L-aspartate + H2O = a carboxylate + L-aspartate. It catalyses the reaction N-acetyl-L-aspartate + H2O = L-aspartate + acetate. Catalyzes the deacetylation of N-acetylaspartic acid (NAA) to produce acetate and L-aspartate. NAA occurs in high concentration in brain and its hydrolysis NAA plays a significant part in the maintenance of intact white matter. In other tissues it acts as a scavenger of NAA from body fluids. This chain is Aspartoacylase (ASPA), found in Sus scrofa (Pig).